Here is a 279-residue protein sequence, read N- to C-terminus: MDKEVSELVVLQLIHTLISNKNEELVRNGGGINMIGNNLRISLVKLTNEIQNNLLINELTNLRRQSNVANGNRKLGINDILTIVKNLFPEYRTTLNDGQLSLHGLEMHDIEKLLDEKYDRFKKTQVEQIRMMEDEILKNGIKTGASQLQPHANAGKSGSAGTSATITTTTPHMAHSMDPKREKLLKLYRDTVLNKLESKTGNFQKLFKSPDGSIIKNEINYEDIKNETPGSVHELQLILQKSITDGVMRKVIGTDDWKLARQVQFELDDTVQFMRRALE.

A disordered region spans residues 147–179 (QLQPHANAGKSGSAGTSATITTTTPHMAHSMDP). The span at 154-170 (AGKSGSAGTSATITTTT) shows a compositional bias: low complexity.

Belongs to the EAF5 family. In terms of assembly, component of the NuA4 histone acetyltransferase complex composed of at least ACT1, ARP4, YAF9, VID21, SWC4, EAF3, EAF5, EAF6, EAF7, EPL1, ESA1, TRA1 and YNG2.

Its subcellular location is the nucleus. In terms of biological role, component of the NuA4 histone acetyltransferase complex which is involved in transcriptional activation of selected genes principally by acetylation of nucleosomal histone H4 and H2A. The NuA4 complex is also involved in DNA repair. The polypeptide is Chromatin modification-related protein EAF5 (EAF5) (Saccharomyces cerevisiae (strain ATCC 204508 / S288c) (Baker's yeast)).